Here is a 177-residue protein sequence, read N- to C-terminus: Probable chemoreceptor glutamine deamidase CheD (177 aa).

Belongs to the CheD family.

The enzyme catalyses L-glutaminyl-[protein] + H2O = L-glutamyl-[protein] + NH4(+). Functionally, probably deamidates glutamine residues to glutamate on methyl-accepting chemotaxis receptors (MCPs), playing an important role in chemotaxis. In Pseudomonas syringae pv. syringae (strain B728a), this protein is Probable chemoreceptor glutamine deamidase CheD.